Reading from the N-terminus, the 108-residue chain is MSQRYLRMDLSIALGALPQWQAHPTRQALQKRYRFDHFNAAFGFMSRVAMFAEKIDHHPEWSNVYNRVDVVLTTHDAGGVTELDVRMAQFMDEAAAQAGATGLSLPVY.

The protein belongs to the pterin-4-alpha-carbinolamine dehydratase family.

It carries out the reaction (4aS,6R)-4a-hydroxy-L-erythro-5,6,7,8-tetrahydrobiopterin = (6R)-L-erythro-6,7-dihydrobiopterin + H2O. The sequence is that of Putative pterin-4-alpha-carbinolamine dehydratase from Bordetella avium (strain 197N).